Consider the following 245-residue polypeptide: MEPATSRAPRSRFVVWLHGLGDTGRANEFLADSFPTTAAFADARWAFPTAPTAPVTCNRGMLMPSWFDIHDAPITSVSVRDEEDVLRAVQSVHAMIDREIAAGTNPQDVFVFGLSQGGALGIASVLLHPKTLGGCAVFSGFLPFNSSFAVRVTAQAKKTPVLWIHGQAGSLIPIKEGRDGIKFLRGLGMSCEFKVYDRLGHSLEYYELDYCQRWVEKILHRSGREGLIRRVSRNIFLCSNLFNSS.

Catalysis depends on charge relay system residues S115 and H201.

This sequence belongs to the AB hydrolase superfamily. AB hydrolase 2 family.

In Oryza sativa subsp. japonica (Rice), this protein is Probable inactive carboxylesterase Os04g0669700.